Here is a 521-residue protein sequence, read N- to C-terminus: Zinc finger protein 394 (521 aa).

Residues 1 to 45 (MAAGSGVVPPPLGAGLCTVKVEEDSPGNQESSGSGDWQNPETSRK) are disordered. Residue Lys20 forms a Glycyl lysine isopeptide (Lys-Gly) (interchain with G-Cter in SUMO2) linkage. The segment covering 26–41 (PGNQESSGSGDWQNPE) has biased composition (polar residues). Positions 38 to 133 (QNPETSRKQF…RALDRASPQG (96 aa)) constitute an SCAN box domain. The 62-residue stretch at 135–196 (MTFKDVAESL…KQEILKEAEP (62 aa)) folds into the KRAB domain. A Glycyl lysine isopeptide (Lys-Gly) (interchain with G-Cter in SUMO2) cross-link involves residue Lys259. C2H2-type zinc fingers lie at residues 327–349 (YKCDSCEKGFRQRSDLFKHQRIH), 355–377 (YQCQECGKRFSQSAALVKHQRTH), and 383–405 (YACPECGECFRQSSHLSRHQRTH). The segment at 411–432 (YKCEECGEIVHVSSLFRHQRLH) adopts a C2H2-type 4; atypical zinc-finger fold. Lys412 participates in a covalent cross-link: Glycyl lysine isopeptide (Lys-Gly) (interchain with G-Cter in SUMO2). C2H2-type zinc fingers lie at residues 438–460 (YKCGDCEKSFRQRSDLFKHQRTH), 466–488 (YACVVCGRRFSQSATLIKHQRTH), and 494–516 (YKCFQCGERFRQSTHLVRHQRIH).

The protein belongs to the krueppel C2H2-type zinc-finger protein family. Expressed at high level in testis.

The protein localises to the nucleus. Its function is as follows. May be involved in transcriptional regulation. This is Zinc finger protein 394 (Znf394) from Mus musculus (Mouse).